The chain runs to 273 residues: Protein N-terminal and lysine N-methyltransferase EFM7 (273 aa).

A disordered region spans residues 1–32; that stretch reads MSDIEDLASGGLFDEPKDFYKPEEQPGSDSYA. A compositionally biased stretch (basic and acidic residues) spans 14-24; the sequence is DEPKDFYKPEE. S-adenosyl-L-methionine contacts are provided by residues tryptophan 65, 92-94, aspartate 114, tryptophan 161, and serine 183; that span reads GAG.

Belongs to the class I-like SAM-binding methyltransferase superfamily. EFM7 family.

It is found in the cytoplasm. S-adenosyl-L-methionine-dependent protein methyltransferase that trimethylates the N-terminal glycine 'Gly-2' of elongation factor 1-alpha, before also catalyzing the mono- and dimethylation of 'Lys-3'. This chain is Protein N-terminal and lysine N-methyltransferase EFM7, found in Yarrowia lipolytica (strain CLIB 122 / E 150) (Yeast).